The primary structure comprises 644 residues: ATP-dependent zinc metalloprotease FtsH (644 aa).

Over 1–4 (MAKN) the chain is Cytoplasmic. Residues 5-25 (LILWLVIAVVLMSVFQSFGPS) traverse the membrane as a helical segment. Topologically, residues 26 to 98 (ESNGRKVDYS…VGEPPEEPSL (73 aa)) are periplasmic. The chain crosses the membrane as a helical span at residues 99 to 119 (LASIFISWFPMLLLIGVWIFF). Residues 120–644 (MRQMQGGGGK…NTMSEQLGDK (525 aa)) are Cytoplasmic-facing. 192–199 (GPPGTGKT) serves as a coordination point for ATP. Zn(2+) is bound at residue His-414. The active site involves Glu-415. Zn(2+) contacts are provided by His-418 and Asp-492. The segment at 598–644 (VRPPAGWEEPGASNNSGDNGSPKAPRPVDEPRTPNPGNTMSEQLGDK) is disordered. Polar residues predominate over residues 632-644 (NPGNTMSEQLGDK).

It in the central section; belongs to the AAA ATPase family. The protein in the C-terminal section; belongs to the peptidase M41 family. As to quaternary structure, homohexamer. Requires Zn(2+) as cofactor.

The protein resides in the cell inner membrane. Functionally, acts as a processive, ATP-dependent zinc metallopeptidase for both cytoplasmic and membrane proteins. Plays a role in the quality control of integral membrane proteins. In Shigella flexneri, this protein is ATP-dependent zinc metalloprotease FtsH.